Reading from the N-terminus, the 680-residue chain is Zinc finger protein 334 (680 aa).

Residues 10 to 81 enclose the KRAB domain; sequence VSFQDLTVNF…EEFSNQNYPD (72 aa). 14 consecutive C2H2-type zinc fingers follow at residues 237-259, 265-287, 293-315, 321-343, 349-371, 377-399, 405-427, 433-455, 461-483, 544-566, 572-594, 600-622, 628-650, and 656-678; these read NECN…QRIH, YVCS…RRIH, YECS…QKIH, YECN…FRSH, YECK…QRTH, NECK…QRIH, YECS…RRSH, YECS…QITH, YECN…QRTH, YECN…RRIH, YECN…QKIH, and YECN…QKSH.

The protein belongs to the krueppel C2H2-type zinc-finger protein family.

The protein resides in the nucleus. Functionally, may be involved in transcriptional regulation. In Homo sapiens (Human), this protein is Zinc finger protein 334 (ZNF334).